Reading from the N-terminus, the 265-residue chain is Transcription factor LBX1 (265 aa).

A compositionally biased stretch (basic and acidic residues) spans 1–20; sequence MTSKDEAKSSSVEERRRHAL. The segment at 1–33 is disordered; sequence MTSKDEAKSSSVEERRRHALDLLPPPANSNKPL. A DNA-binding region (homeobox) is located at residues 125 to 184; that stretch reads RRKSRTAFTNHQIYELEKRFLYQKYLSPADRDQIAQQLGLTNAQVITWFQNRRAKLKRDL. Positions 212-265 are disordered; sequence EEETNSVRDDSRSRSPQLGLSGHMPLSPSSPLTEQHTSKECSEDEEDVEIDVDD. Residues 253 to 265 show a composition bias toward acidic residues; sequence SEDEEDVEIDVDD.

The protein resides in the nucleus. Transcription factor that controls hypaxial muscle development by down-regulating myod1 and cdkn1b/p27, thereby allowing myoblasts to proliferate before the onset of terminal differentiation. This Xenopus tropicalis (Western clawed frog) protein is Transcription factor LBX1.